The following is a 195-amino-acid chain: ATP-dependent Clp protease proteolytic subunit (195 aa).

S98 serves as the catalytic Nucleophile. Residue H123 is part of the active site.

Belongs to the peptidase S14 family. Fourteen ClpP subunits assemble into 2 heptameric rings which stack back to back to give a disk-like structure with a central cavity, resembling the structure of eukaryotic proteasomes.

The protein localises to the cytoplasm. It carries out the reaction Hydrolysis of proteins to small peptides in the presence of ATP and magnesium. alpha-casein is the usual test substrate. In the absence of ATP, only oligopeptides shorter than five residues are hydrolyzed (such as succinyl-Leu-Tyr-|-NHMec, and Leu-Tyr-Leu-|-Tyr-Trp, in which cleavage of the -Tyr-|-Leu- and -Tyr-|-Trp bonds also occurs).. Functionally, cleaves peptides in various proteins in a process that requires ATP hydrolysis. Has a chymotrypsin-like activity. Plays a major role in the degradation of misfolded proteins. This chain is ATP-dependent Clp protease proteolytic subunit, found in Thermodesulfovibrio yellowstonii (strain ATCC 51303 / DSM 11347 / YP87).